Consider the following 345-residue polypeptide: Phosphoribosylformylglycinamidine cyclo-ligase (345 aa).

It belongs to the AIR synthase family.

The protein localises to the cytoplasm. It carries out the reaction 2-formamido-N(1)-(5-O-phospho-beta-D-ribosyl)acetamidine + ATP = 5-amino-1-(5-phospho-beta-D-ribosyl)imidazole + ADP + phosphate + H(+). It participates in purine metabolism; IMP biosynthesis via de novo pathway; 5-amino-1-(5-phospho-D-ribosyl)imidazole from N(2)-formyl-N(1)-(5-phospho-D-ribosyl)glycinamide: step 2/2. The polypeptide is Phosphoribosylformylglycinamidine cyclo-ligase (Methanopyrus kandleri (strain AV19 / DSM 6324 / JCM 9639 / NBRC 100938)).